The primary structure comprises 289 residues: 4-diphosphocytidyl-2-C-methyl-D-erythritol kinase (289 aa).

Residue Lys-10 is part of the active site. 94–104 serves as a coordination point for ATP; the sequence is PVAAGLAGGSS. Asp-136 is a catalytic residue.

This sequence belongs to the GHMP kinase family. IspE subfamily.

The enzyme catalyses 4-CDP-2-C-methyl-D-erythritol + ATP = 4-CDP-2-C-methyl-D-erythritol 2-phosphate + ADP + H(+). The protein operates within isoprenoid biosynthesis; isopentenyl diphosphate biosynthesis via DXP pathway; isopentenyl diphosphate from 1-deoxy-D-xylulose 5-phosphate: step 3/6. Functionally, catalyzes the phosphorylation of the position 2 hydroxy group of 4-diphosphocytidyl-2C-methyl-D-erythritol. The protein is 4-diphosphocytidyl-2-C-methyl-D-erythritol kinase of Geobacillus sp. (strain WCH70).